The chain runs to 66 residues: Small ribosomal subunit protein bS21 (66 aa).

It belongs to the bacterial ribosomal protein bS21 family.

In Rickettsia typhi (strain ATCC VR-144 / Wilmington), this protein is Small ribosomal subunit protein bS21.